A 508-amino-acid polypeptide reads, in one-letter code: Protein FAM227B (508 aa).

2 disordered regions span residues 1–22 (MAGQ…MQEP) and 485–508 (ASLS…EEEY). The segment covering 486–497 (SLSSSSSSSPSS) has biased composition (low complexity).

This sequence belongs to the FAM227 family.

The protein is Protein FAM227B (FAM227B) of Homo sapiens (Human).